A 154-amino-acid chain; its full sequence is Large ribosomal subunit protein uL23 (154 aa).

Positions 1 to 39 (MAPAKADPSKKSDPKAQAAKVAKAVKSGSTLKKKSQKIR) are disordered. Positions 15–26 (KAQAAKVAKAVK) are enriched in low complexity.

Belongs to the universal ribosomal protein uL23 family.

This protein binds to a specific region on the 26S rRNA. This is Large ribosomal subunit protein uL23 (RPL23A) from Nicotiana tabacum (Common tobacco).